A 38-amino-acid polypeptide reads, in one-letter code: Large ribosomal subunit protein bL36 (38 aa).

Belongs to the bacterial ribosomal protein bL36 family.

The protein is Large ribosomal subunit protein bL36 of Sorangium cellulosum (strain So ce56) (Polyangium cellulosum (strain So ce56)).